The following is a 153-amino-acid chain: Large ribosomal subunit protein uL15 (153 aa).

The interval arginine 21–arginine 41 is disordered. Over residues isoleucine 23–isoleucine 35 the composition is skewed to gly residues.

It belongs to the universal ribosomal protein uL15 family. Part of the 50S ribosomal subunit.

Functionally, binds to the 23S rRNA. This chain is Large ribosomal subunit protein uL15, found in Rickettsia africae (strain ESF-5).